We begin with the raw amino-acid sequence, 146 residues long: Large ribosomal subunit protein uL13 (146 aa).

Belongs to the universal ribosomal protein uL13 family. As to quaternary structure, part of the 50S ribosomal subunit.

In terms of biological role, this protein is one of the early assembly proteins of the 50S ribosomal subunit, although it is not seen to bind rRNA by itself. It is important during the early stages of 50S assembly. The chain is Large ribosomal subunit protein uL13 from Malacoplasma penetrans (strain HF-2) (Mycoplasma penetrans).